The primary structure comprises 115 residues: NADH-ubiquinone oxidoreductase chain 3 (115 aa).

Helical transmembrane passes span 3–23 (LIMTLFINITLTSLLVLIAFW), 55–75 (FFLVAITFLLFDLEIALLLPL), and 84–104 (LTTMLTTALLLISLLAVSLAY).

Belongs to the complex I subunit 3 family. Core subunit of respiratory chain NADH dehydrogenase (Complex I) which is composed of 45 different subunits. Interacts with TMEM186. Interacts with TMEM242.

It localises to the mitochondrion inner membrane. The enzyme catalyses a ubiquinone + NADH + 5 H(+)(in) = a ubiquinol + NAD(+) + 4 H(+)(out). Its function is as follows. Core subunit of the mitochondrial membrane respiratory chain NADH dehydrogenase (Complex I) which catalyzes electron transfer from NADH through the respiratory chain, using ubiquinone as an electron acceptor. Essential for the catalytic activity of complex I. This is NADH-ubiquinone oxidoreductase chain 3 from Ailurus fulgens (Himalayan red panda).